We begin with the raw amino-acid sequence, 463 residues long: L-seryl-tRNA(Sec) selenium transferase (463 aa).

Lys295 is modified (N6-(pyridoxal phosphate)lysine).

Belongs to the SelA family. In terms of assembly, homodecamer; pentamer of dimers. Binds only one seryl-tRNA(Sec) per dimer. Requires pyridoxal 5'-phosphate as cofactor.

Its subcellular location is the cytoplasm. It carries out the reaction L-seryl-tRNA(Sec) + selenophosphate + H(+) = L-selenocysteinyl-tRNA(Sec) + phosphate. The protein operates within aminoacyl-tRNA biosynthesis; selenocysteinyl-tRNA(Sec) biosynthesis; selenocysteinyl-tRNA(Sec) from L-seryl-tRNA(Sec) (bacterial route): step 1/1. Converts seryl-tRNA(Sec) to selenocysteinyl-tRNA(Sec) required for selenoprotein biosynthesis. This Salmonella enteritidis PT4 (strain P125109) protein is L-seryl-tRNA(Sec) selenium transferase.